Here is a 278-residue protein sequence, read N- to C-terminus: Probable endonuclease 4 (278 aa).

Positions 69, 109, 145, 179, 182, 214, 227, 229, and 259 each coordinate Zn(2+).

The protein belongs to the AP endonuclease 2 family. The cofactor is Zn(2+).

The enzyme catalyses Endonucleolytic cleavage to 5'-phosphooligonucleotide end-products.. In terms of biological role, endonuclease IV plays a role in DNA repair. It cleaves phosphodiester bonds at apurinic or apyrimidinic (AP) sites, generating a 3'-hydroxyl group and a 5'-terminal sugar phosphate. The chain is Probable endonuclease 4 from Bacteroides fragilis (strain ATCC 25285 / DSM 2151 / CCUG 4856 / JCM 11019 / LMG 10263 / NCTC 9343 / Onslow / VPI 2553 / EN-2).